A 216-amino-acid chain; its full sequence is Pyridoxine/pyridoxamine 5'-phosphate oxidase (216 aa).

Residues 63–68 (RMVLMK), 78–79 (YS), Lys85, and Gln107 contribute to the FMN site. Residue Lys68 participates in substrate binding. Tyr125 and Arg129 together coordinate substrate. FMN is bound by residues 142–143 (QS) and Trp187. 193-195 (RLH) contributes to the substrate binding site. Arg197 provides a ligand contact to FMN.

This sequence belongs to the pyridoxamine 5'-phosphate oxidase family. As to quaternary structure, homodimer. FMN is required as a cofactor.

The enzyme catalyses pyridoxamine 5'-phosphate + O2 + H2O = pyridoxal 5'-phosphate + H2O2 + NH4(+). It catalyses the reaction pyridoxine 5'-phosphate + O2 = pyridoxal 5'-phosphate + H2O2. It functions in the pathway cofactor metabolism; pyridoxal 5'-phosphate salvage; pyridoxal 5'-phosphate from pyridoxamine 5'-phosphate: step 1/1. It participates in cofactor metabolism; pyridoxal 5'-phosphate salvage; pyridoxal 5'-phosphate from pyridoxine 5'-phosphate: step 1/1. Functionally, catalyzes the oxidation of either pyridoxine 5'-phosphate (PNP) or pyridoxamine 5'-phosphate (PMP) into pyridoxal 5'-phosphate (PLP). This chain is Pyridoxine/pyridoxamine 5'-phosphate oxidase, found in Bradyrhizobium sp. (strain ORS 278).